Here is a 458-residue protein sequence, read N- to C-terminus: MSKDKLWGGRFTQPTDKFVEEFTASINFDKRLYHQDIRGSIAHATMLGKQGIIPIADVENIVSGLKAILEQIEAGKFDFSVSLEDIHMNIEARLSEKIGDAGKRLHTGRSRNDQVALDIRLYLRDELVEVSAYIDLLIDSIIHQAEENLGVIMPGFTHLQTAQPILFSHHMMAYHEMLKRDKARMEDCLKRTNVLPLGAGALAGTTFPIDREYVAELLDFAEVTRNSLDSVSDRDFAMEFCAASSILMVHLSRFSEELILWSTSEFKFVELSDSFCTGSSIMPQKKNPDVPELVRGKTGRVNGNLVALLTLMKSLPLAYNKDMQEDKEPLFDTIDTVKGCLKVFADMVREMKINPERMEVAAAAGFSTATDVADYLVRKGIPFRDAHEIVGKTVRYCIENEIDIPELSLAEWQLFSGRIEEDIFESITLEASVNARRATGGTALERVRAEIARAKEGR.

This sequence belongs to the lyase 1 family. Argininosuccinate lyase subfamily.

The protein resides in the cytoplasm. The catalysed reaction is 2-(N(omega)-L-arginino)succinate = fumarate + L-arginine. It functions in the pathway amino-acid biosynthesis; L-arginine biosynthesis; L-arginine from L-ornithine and carbamoyl phosphate: step 3/3. This chain is Argininosuccinate lyase, found in Geobacter sp. (strain M21).